The sequence spans 204 residues: Signal peptidase I (204 aa).

Over 1–10 the chain is Cytoplasmic; sequence MNLFKNFLKE. Residues 11–30 traverse the membrane as a helical segment; sequence WGLFLLILSLLALSRIFFWS. The Extracellular portion of the chain corresponds to 31–204; it reads NVRVEGHSMD…FWPITRIGTF (174 aa). Active-site residues include S38 and K76.

Belongs to the peptidase S26 family.

Its subcellular location is the cell membrane. The catalysed reaction is Cleavage of hydrophobic, N-terminal signal or leader sequences from secreted and periplasmic proteins.. This is Signal peptidase I (lepB) from Streptococcus pneumoniae (strain ATCC BAA-255 / R6).